Consider the following 566-residue polypeptide: Serine/threonine-protein kinase PknE (566 aa).

Residues 1–337 (MDGTAESREG…PLPRSARQPW (337 aa)) lie on the Cytoplasmic side of the membrane. At serine 7 the chain carries Phosphoserine; by autocatalysis. Threonine 11 bears the Phosphothreonine; by autocatalysis mark. Positions 16–275 (YRLRRLVGRG…DLSAAAHAAL (260 aa)) constitute a Protein kinase domain. Residues 22 to 30 (VGRGGMGDV) and lysine 45 each bind ATP. 2 positions are modified to phosphothreonine; by autocatalysis: threonine 50 and threonine 59. Aspartate 139 acts as the Proton acceptor in catalysis. A phosphothreonine; by autocatalysis mark is found at threonine 170, threonine 175, and threonine 178. A disordered region spans residues 296-330 (PVPSTHPVSPGTRWPQPTPWAGGAPPWGPPSSPLP). Residues 338–358 (LWVGVAVAVVVALAGGLGIAL) traverse the membrane as a helical segment. Residues 359-566 (AHPWRSSGPR…DPSWLARLIG (208 aa)) are Extracellular-facing.

It belongs to the protein kinase superfamily. Ser/Thr protein kinase family. In terms of processing, autophosphorylated on serine and threonine residues. Dephosphorylated by PstP.

It is found in the cell membrane. It carries out the reaction L-seryl-[protein] + ATP = O-phospho-L-seryl-[protein] + ADP + H(+). The enzyme catalyses L-threonyl-[protein] + ATP = O-phospho-L-threonyl-[protein] + ADP + H(+). The polypeptide is Serine/threonine-protein kinase PknE (pknE) (Mycobacterium bovis (strain ATCC BAA-935 / AF2122/97)).